A 275-amino-acid polypeptide reads, in one-letter code: MRFRTLLIAFLALCLGLITACSEGPANAVNPQDLTYDEILNTGLANKCPQISEFTRGSIPIEPGQTYFVDDLCLEPQEYFVKEEPVNKRQEAEYVPGKLLTRYTTSLEQISGKITVDEDGVVTFYEEGGIDFQPVTVQLPGGEQVPFFFTIKNLVGKTEPGFSSINSSIDFEGDFRVPSYRGATFLDPKGRGLATGYDNAVALPATADKEDYANVKQTPIGKGSISLQVTKVDQATGEIAGVFDSEQPSDTDLGAKEPVEVKIRGIFYARVTPEA.

The N-terminal stretch at 1–28 (MRFRTLLIAFLALCLGLITACSEGPANA) is a signal peptide.

This sequence belongs to the PsbO family. As to quaternary structure, PSII is composed of 1 copy each of membrane proteins PsbA, PsbB, PsbC, PsbD, PsbE, PsbF, PsbH, PsbI, PsbJ, PsbK, PsbL, PsbM, PsbT, PsbX, PsbY, PsbZ, Psb30/Ycf12, peripheral proteins PsbO, CyanoQ (PsbQ), PsbU, PsbV and a large number of cofactors. It forms dimeric complexes.

Its subcellular location is the cellular thylakoid membrane. Functionally, one of the extrinsic, lumenal subunits of photosystem II (PSII), which stabilize and protect the oxygen-evolving complex. PSII is a light-driven water plastoquinone oxidoreductase, using light energy to abstract electrons from H(2)O, generating a proton gradient subsequently used for ATP formation. Required for dimerization of PSII and for binding of PsbQ to PSII. This is Photosystem II extrinsic protein O from Crocosphaera subtropica (strain ATCC 51142 / BH68) (Cyanothece sp. (strain ATCC 51142)).